A 199-amino-acid polypeptide reads, in one-letter code: MIKYLSTNISLYFQENNSCLSKKDVLKIQYTLEAILSDLSKFIIIFLVFLFIKEIPLFLFSFIILNSTRPLLGGIHCKTYYGCLTCSILYFMIILLFTRLFPELNTNFYIVFFILSLAITFIFAPCPNEKRPVKNKATLKILSLISLTFWIILFYLSPLQTRNCILISIFLQIIQVIIINTKGVIFNAKNNKTFFNRTT.

5 helical membrane-spanning segments follow: residues 43 to 63, 81 to 101, 108 to 128, 139 to 159, and 165 to 185; these read IIIF…FSFI, YGCL…TRLF, FYIV…PCPN, LKIL…LSPL, and ILIS…KGVI.

The protein belongs to the AgrB family.

The protein localises to the cell membrane. Its function is as follows. May be involved in the proteolytic processing of a quorum sensing system signal molecule precursor. The polypeptide is Putative AgrB-like protein (cfg02) (Clostridium beijerinckii (Clostridium MP)).